The following is a 327-amino-acid chain: Pyruvate dehydrogenase E1 component subunit beta (327 aa).

Glutamate 60 serves as a coordination point for thiamine diphosphate.

Heterodimer of an alpha and a beta chain. The cofactor is thiamine diphosphate.

It carries out the reaction N(6)-[(R)-lipoyl]-L-lysyl-[protein] + pyruvate + H(+) = N(6)-[(R)-S(8)-acetyldihydrolipoyl]-L-lysyl-[protein] + CO2. Its function is as follows. The pyruvate dehydrogenase complex catalyzes the overall conversion of pyruvate to acetyl-CoA and CO(2). It contains multiple copies of three enzymatic components: pyruvate dehydrogenase (E1), dihydrolipoamide acetyltransferase (E2) and lipoamide dehydrogenase (E3). The polypeptide is Pyruvate dehydrogenase E1 component subunit beta (pdhB) (Acholeplasma laidlawii).